We begin with the raw amino-acid sequence, 200 residues long: 3-isopropylmalate dehydratase small subunit (200 aa).

Belongs to the LeuD family. LeuD type 1 subfamily. Heterodimer of LeuC and LeuD.

The enzyme catalyses (2R,3S)-3-isopropylmalate = (2S)-2-isopropylmalate. It functions in the pathway amino-acid biosynthesis; L-leucine biosynthesis; L-leucine from 3-methyl-2-oxobutanoate: step 2/4. Functionally, catalyzes the isomerization between 2-isopropylmalate and 3-isopropylmalate, via the formation of 2-isopropylmaleate. The polypeptide is 3-isopropylmalate dehydratase small subunit (Campylobacter jejuni subsp. jejuni serotype O:23/36 (strain 81-176)).